A 130-amino-acid polypeptide reads, in one-letter code: Large ribosomal subunit protein bL17 (130 aa).

Belongs to the bacterial ribosomal protein bL17 family. In terms of assembly, part of the 50S ribosomal subunit. Contacts protein L32.

The sequence is that of Large ribosomal subunit protein bL17 from Nitrosomonas eutropha (strain DSM 101675 / C91 / Nm57).